Here is a 171-residue protein sequence, read N- to C-terminus: UPF0398 protein stu0232 (171 aa).

Belongs to the UPF0398 family.

The protein is UPF0398 protein stu0232 of Streptococcus thermophilus (strain ATCC BAA-250 / LMG 18311).